We begin with the raw amino-acid sequence, 268 residues long: MPKSFRHLVQALACLALLASASLQAQESRLDRILESGVLRVATTGDYKPFSYRTEEGGYAGFDVDMAQRLAESLGAKLVVVPTSWPNLMRDFADDRFDIAMSGISINLERQRQAYFSIPYLRDGKTPITLCSEEARFQTLEQIDQPGVTAIVNPGGTNEKFARANLKKARILVHPDNVTIFQQIVDGKADLMMTDAIEARLQSRLHPELCAVHPQQPFDFAEKAYLLPRDEAFKRYVDQWLHIAEQSGLLRQRMEHWLEYRWPTAHGK.

A signal peptide spans 1–25; it reads MPKSFRHLVQALACLALLASASLQA.

The protein belongs to the bacterial solute-binding protein 3 family. Homodimer.

Its subcellular location is the periplasm. The enzyme catalyses prephenate + H(+) = 3-phenylpyruvate + CO2 + H2O. It catalyses the reaction L-arogenate + H(+) = L-phenylalanine + CO2 + H2O. Its pathway is amino-acid biosynthesis; L-phenylalanine biosynthesis; L-phenylalanine from L-arogenate: step 1/1. It participates in amino-acid biosynthesis; L-phenylalanine biosynthesis; phenylpyruvate from prephenate: step 1/1. Forms alternative pathway for phenylalanine biosynthesis. Can catalyze two reactions: prephenate dehydratase and arogenate dehydratase. May have a role in chemotaxis or transport. This Pseudomonas aeruginosa (strain ATCC 15692 / DSM 22644 / CIP 104116 / JCM 14847 / LMG 12228 / 1C / PRS 101 / PAO1) protein is Cyclohexadienyl dehydratase (pheC).